The following is a 279-amino-acid chain: NH(3)-dependent NAD(+) synthetase (279 aa).

46-53 (GISGGQDS) is a binding site for ATP. Asp52 lines the Mg(2+) pocket. Residue Arg145 participates in deamido-NAD(+) binding. Thr165 is a binding site for ATP. Position 170 (Glu170) interacts with Mg(2+). Residues Lys178 and Asp185 each contribute to the deamido-NAD(+) site. ATP-binding residues include Lys194 and Thr216. 265-266 (HK) is a deamido-NAD(+) binding site.

This sequence belongs to the NAD synthetase family. Homodimer.

The catalysed reaction is deamido-NAD(+) + NH4(+) + ATP = AMP + diphosphate + NAD(+) + H(+). Its pathway is cofactor biosynthesis; NAD(+) biosynthesis; NAD(+) from deamido-NAD(+) (ammonia route): step 1/1. Its function is as follows. Catalyzes the ATP-dependent amidation of deamido-NAD to form NAD. Uses ammonia as a nitrogen source. The sequence is that of NH(3)-dependent NAD(+) synthetase from Rhodococcus opacus (strain B4).